The following is a 391-amino-acid chain: S-adenosylmethionine synthase (391 aa).

Histidine 14 contacts ATP. Aspartate 16 contributes to the Mg(2+) binding site. Residue glutamate 42 coordinates K(+). L-methionine is bound by residues glutamate 55 and glutamine 98. Residues 98–108 are flexible loop; the sequence is QSPDIAMGVDE. Residues 172-174, 238-239, aspartate 247, 253-254, alanine 270, and lysine 274 each bind ATP; these read DGK, RF, and RK. L-methionine is bound at residue aspartate 247. Lysine 278 contacts L-methionine.

This sequence belongs to the AdoMet synthase family. In terms of assembly, homotetramer; dimer of dimers. It depends on Mg(2+) as a cofactor. The cofactor is K(+).

The protein localises to the cytoplasm. It carries out the reaction L-methionine + ATP + H2O = S-adenosyl-L-methionine + phosphate + diphosphate. It participates in amino-acid biosynthesis; S-adenosyl-L-methionine biosynthesis; S-adenosyl-L-methionine from L-methionine: step 1/1. Functionally, catalyzes the formation of S-adenosylmethionine (AdoMet) from methionine and ATP. The overall synthetic reaction is composed of two sequential steps, AdoMet formation and the subsequent tripolyphosphate hydrolysis which occurs prior to release of AdoMet from the enzyme. The sequence is that of S-adenosylmethionine synthase from Clostridium tetani (strain Massachusetts / E88).